Consider the following 894-residue polypeptide: Desmocollin-1 (894 aa).

An N-terminal signal peptide occupies residues 1–29; that stretch reads MALASAAPGSIFCKQLLFSLLVLTLLCDA. Positions 30–134 are excised as a propeptide; that stretch reads CQKVYLRVPS…KDTALKRSKR (105 aa). Cadherin domains lie at 135 to 242, 243 to 354, 355 to 471, 472 to 575, and 576 to 682; these read RWAP…APYF, EHRV…PPSF, TETS…GPEC, HPPV…DHAP, and QIDK…STRD. Topologically, residues 135–691 are extracellular; sequence RWAPIPASLM…DVRPNVILGR (557 aa). N-linked (GlcNAc...) asparagine glycosylation is present at N165. Phosphothreonine is present on T385. An N-linked (GlcNAc...) asparagine glycan is attached at N546. Residues 692 to 714 form a helical membrane-spanning segment; that stretch reads WAILAMVLGSVLLLCILFTCFCV. The Cytoplasmic portion of the chain corresponds to 715–894; the sequence is TAKRTVKKCF…RTLAKTCIKK (180 aa).

In terms of assembly, binds to JUP/plakoglobin. Strongly expressed in epidermis, less in lymph node and tongue.

It localises to the cell membrane. Its subcellular location is the cell junction. The protein localises to the desmosome. A component of desmosome cell-cell junctions which are required for positive regulation of cellular adhesion. Required for desmosome adhesion strength between the granular layers of the epidermis, as a result moderates epidermal proliferation and differentiation. Is therefore required to maintain postnatal epidermal barrier function and normal hair follicle morphology into adulthood. The polypeptide is Desmocollin-1 (DSC1) (Homo sapiens (Human)).